Reading from the N-terminus, the 179-residue chain is Large ribosomal subunit protein uL6 (179 aa).

It belongs to the universal ribosomal protein uL6 family. In terms of assembly, part of the 50S ribosomal subunit.

In terms of biological role, this protein binds to the 23S rRNA, and is important in its secondary structure. It is located near the subunit interface in the base of the L7/L12 stalk, and near the tRNA binding site of the peptidyltransferase center. This is Large ribosomal subunit protein uL6 from Synechococcus elongatus (strain ATCC 33912 / PCC 7942 / FACHB-805) (Anacystis nidulans R2).